The sequence spans 466 residues: Ribulose bisphosphate carboxylase large chain (466 aa).

Residue K5 is modified to N6,N6,N6-trimethyllysine. Residues N114 and T164 each contribute to the substrate site. The Proton acceptor role is filled by K166. K168 serves as a coordination point for substrate. Residues K192, D194, and E195 each coordinate Mg(2+). N6-carboxylysine is present on K192. H285 acts as the Proton acceptor in catalysis. Substrate-binding residues include R286, H318, and S370.

This sequence belongs to the RuBisCO large chain family. Type I subfamily. Heterohexadecamer of 8 large chains and 8 small chains; disulfide-linked. The disulfide link is formed within the large subunit homodimers. The cofactor is Mg(2+). Post-translationally, the disulfide bond which can form in the large chain dimeric partners within the hexadecamer appears to be associated with oxidative stress and protein turnover.

The protein resides in the plastid. It localises to the chloroplast. The catalysed reaction is 2 (2R)-3-phosphoglycerate + 2 H(+) = D-ribulose 1,5-bisphosphate + CO2 + H2O. It catalyses the reaction D-ribulose 1,5-bisphosphate + O2 = 2-phosphoglycolate + (2R)-3-phosphoglycerate + 2 H(+). In terms of biological role, ruBisCO catalyzes two reactions: the carboxylation of D-ribulose 1,5-bisphosphate, the primary event in carbon dioxide fixation, as well as the oxidative fragmentation of the pentose substrate in the photorespiration process. Both reactions occur simultaneously and in competition at the same active site. This is Ribulose bisphosphate carboxylase large chain from Drosera capensis (Cape sundew).